The following is a 231-amino-acid chain: Putative N-acetylmannosamine-6-phosphate 2-epimerase (231 aa).

Belongs to the NanE family.

The enzyme catalyses an N-acyl-D-glucosamine 6-phosphate = an N-acyl-D-mannosamine 6-phosphate. It participates in amino-sugar metabolism; N-acetylneuraminate degradation; D-fructose 6-phosphate from N-acetylneuraminate: step 3/5. Converts N-acetylmannosamine-6-phosphate (ManNAc-6-P) to N-acetylglucosamine-6-phosphate (GlcNAc-6-P). This Glaesserella parasuis serovar 5 (strain SH0165) (Haemophilus parasuis) protein is Putative N-acetylmannosamine-6-phosphate 2-epimerase.